A 395-amino-acid chain; its full sequence is Protein NDRG1 (395 aa).

The tract at residues Arg325–Cys395 is disordered. The span at Ser326–Gly339 shows a compositional bias: low complexity. 4 consecutive repeat copies span residues Gly339–Glu348, Gly349–Asp358, Gly359–Asp368, and Gly369–Ser378. The 4 X 10 AA tandem repeats of G-[NS]-R-S-R-[AS]-H-T-[DGN]-[DES] stretch occupies residues Gly339–Ser378. Positions His345 to Thr376 are enriched in basic and acidic residues. The segment covering Asp377–Lys389 has biased composition (polar residues).

Belongs to the NDRG family.

In terms of biological role, may be involved in pronephros development, after specification of the pronephros. In Xenopus tropicalis (Western clawed frog), this protein is Protein NDRG1.